Here is a 508-residue protein sequence, read N- to C-terminus: Ribonuclease Y (508 aa).

Residues 198-264 (TVSVINLPND…RLTIEKLITD (67 aa)) form the KH domain. Positions 324–417 (VLTHSIEVAK…VQAADAVSAS (94 aa)) constitute an HD domain.

It belongs to the RNase Y family.

In terms of biological role, endoribonuclease that initiates mRNA decay. The chain is Ribonuclease Y from Fusobacterium nucleatum subsp. nucleatum (strain ATCC 25586 / DSM 15643 / BCRC 10681 / CIP 101130 / JCM 8532 / KCTC 2640 / LMG 13131 / VPI 4355).